The sequence spans 481 residues: Glycosyl hydrolase family 109 protein 1 (481 aa).

Residues 1–29 (MDNSSSRRRFLQTLGLATGALAAGSFANA) constitute a signal peptide (tat-type signal). Residues 84–85 (ER), D106, 155–158 (WEWH), 175–176 (EV), and N204 each bind NAD(+). Residues Y233, R252, 264–267 (YPTH), and Y347 each bind substrate. NAD(+) is bound at residue Y264.

The protein belongs to the Gfo/Idh/MocA family. Glycosyl hydrolase 109 subfamily. NAD(+) serves as cofactor. Predicted to be exported by the Tat system. The position of the signal peptide cleavage has not been experimentally proven.

Its function is as follows. Glycosidase. In Akkermansia muciniphila (strain ATCC BAA-835 / DSM 22959 / JCM 33894 / BCRC 81048 / CCUG 64013 / CIP 107961 / Muc), this protein is Glycosyl hydrolase family 109 protein 1.